Consider the following 485-residue polypeptide: Glutamyl-tRNA(Gln) amidotransferase subunit A (485 aa).

Residues Lys-79 and Ser-154 each act as charge relay system in the active site. Residue Ser-178 is the Acyl-ester intermediate of the active site.

It belongs to the amidase family. GatA subfamily. Heterotrimer of A, B and C subunits.

The catalysed reaction is L-glutamyl-tRNA(Gln) + L-glutamine + ATP + H2O = L-glutaminyl-tRNA(Gln) + L-glutamate + ADP + phosphate + H(+). Functionally, allows the formation of correctly charged Gln-tRNA(Gln) through the transamidation of misacylated Glu-tRNA(Gln) in organisms which lack glutaminyl-tRNA synthetase. The reaction takes place in the presence of glutamine and ATP through an activated gamma-phospho-Glu-tRNA(Gln). This is Glutamyl-tRNA(Gln) amidotransferase subunit A from Staphylococcus epidermidis (strain ATCC 12228 / FDA PCI 1200).